Here is a 167-residue protein sequence, read N- to C-terminus: Small ribosomal subunit protein mS25 (167 aa).

Belongs to the mitochondrion-specific ribosomal protein mS25 family. Component of the mitochondrial ribosome small subunit (28S) which comprises a 12S rRNA and about 30 distinct proteins.

The protein resides in the mitochondrion. In Drosophila melanogaster (Fruit fly), this protein is Small ribosomal subunit protein mS25 (mRpS25).